The following is a 455-amino-acid chain: Chromosomal replication initiator protein DnaA 2 (455 aa).

The segment at 1–95 is domain I, interacts with DnaA modulators; it reads MLTCNDCSTW…KRSSPLVTPS (95 aa). Residues 96–112 are domain II; that stretch reads IAKPATEVSEENKDFQL. The interval 113-328 is domain III, AAA+ region; that stretch reads KLNGAYRFDN…GAINKLTAYC (216 aa). Residues G157, G159, K160, and T161 each coordinate ATP. Residues 329–455 form a domain IV, binds dsDNA region; the sequence is LLFNKPLTET…IAIDSPQHFV (127 aa).

The protein belongs to the DnaA family. In terms of assembly, oligomerizes as a right-handed, spiral filament on DNA at oriC.

The protein localises to the cytoplasm. Plays an essential role in the initiation and regulation of chromosomal replication. ATP-DnaA binds to the origin of replication (oriC) to initiate formation of the DNA replication initiation complex once per cell cycle. Binds the DnaA box (a 9 base pair repeat at the origin) and separates the double-stranded (ds)DNA. Forms a right-handed helical filament on oriC DNA; dsDNA binds to the exterior of the filament while single-stranded (ss)DNA is stabiized in the filament's interior. The ATP-DnaA-oriC complex binds and stabilizes one strand of the AT-rich DNA unwinding element (DUE), permitting loading of DNA polymerase. After initiation quickly degrades to an ADP-DnaA complex that is not apt for DNA replication. Binds acidic phospholipids. The polypeptide is Chromosomal replication initiator protein DnaA 2 (Chlamydia trachomatis serovar D (strain ATCC VR-885 / DSM 19411 / UW-3/Cx)).